The sequence spans 375 residues: Outer membrane porin C (375 aa).

The signal sequence occupies residues 1-21 (MKVKVLSLLVPALLVAGAANA). At 22 to 33 (AEVYNKDGNKLD) the chain is on the periplasmic side. Residues 34-42 (LYGKVDGLH) form a beta stranded membrane-spanning segment. The Extracellular portion of the chain corresponds to 43–53 (YFSDDKSVDGD). The beta stranded transmembrane segment at 54–63 (QTYMRLGFKG) threads the bilayer. The Periplasmic portion of the chain corresponds to 64–73 (ETQVTDQLTG). Residues 74-84 (YGQWEYQIQGN) traverse the membrane as a beta stranded segment. The Extracellular segment spans residues 85–91 (APESENN). A beta stranded transmembrane segment spans residues 92–101 (SWTRVAFAGL). Over 102 to 106 (KFQDI) the chain is Periplasmic. Residues 107 to 115 (GSFDYGRNY) traverse the membrane as a beta stranded segment. Residues 116 to 141 (GVVYDVTSWTDVLPEFGGDTYGSDNF) are Extracellular-facing. The beta stranded transmembrane segment at 142–154 (MQQRGNGFATYRN) threads the bilayer. Residues 155–163 (TDFFGLVDG) are Periplasmic-facing. The chain crosses the membrane as a beta stranded span at residues 164–171 (LNFAVQYQ). At 172 to 204 (GQNGSVSGENDPDFTGHGITNNGRKALRQNGDG) the chain is on the extracellular side. A beta stranded transmembrane segment spans residues 205-211 (VGGSITY). Over 212 to 215 (DYEG) the chain is Periplasmic. Residues 216–223 (FGVGAAVS) form a beta stranded membrane-spanning segment. The Extracellular portion of the chain corresponds to 224 to 245 (SSKRTDAQNTAAYIGNGDRAET). The beta stranded transmembrane segment at 246–252 (YTGGLKY) threads the bilayer. Over 253–256 (DANN) the chain is Periplasmic. The chain crosses the membrane as a beta stranded span at residues 257-264 (IYLAAQYT). Residues 265 to 273 (QTYNATRVG) lie on the Extracellular side of the membrane. Residues 274-290 (SLGWANKAQNFEAVAQY) traverse the membrane as a beta stranded segment. Residues 291–295 (QFDFG) are Periplasmic-facing. The beta stranded transmembrane segment at 296–303 (LRPSVAYL) threads the bilayer. The Extracellular segment spans residues 304 to 326 (QSKGKNLGTIGTRNYDDEDILKY). A beta stranded membrane pass occupies residues 327–334 (VDVGATYY). The Periplasmic segment spans residues 335-338 (FNKN). Residues 339–346 (MSTYVDYK) traverse the membrane as a beta stranded segment. Residues 347–366 (INLLDDNQFTRDAGINTDNI) are Extracellular-facing. The chain crosses the membrane as a beta stranded span at residues 367–374 (VALGLVYQ). A topological domain (periplasmic) is located at residue Phe-375.

The protein belongs to the Gram-negative porin family. As to quaternary structure, homotrimer. Forms mixed heterotrimers with OmpF; other mixed heterotrimers are also probable.

Its subcellular location is the cell outer membrane. In terms of biological role, forms pores that allow passive diffusion of small molecules across the outer membrane. (Microbial infection) Supports colicin E5 entry in the absence of its major receptor OmpF. Functionally, (Microbial infection) A mixed OmpC-OmpF heterotrimer is the outer membrane receptor for toxin CdiA-EC536. This is Outer membrane porin C (ompC) from Escherichia coli O6:K15:H31 (strain 536 / UPEC).